The chain runs to 494 residues: Subtilisin-like serine protease EN45_078720 (494 aa).

The signal sequence occupies residues 1-16 (MKGFLSLTLLPLLVAA). Residues 17–136 (SPVAVNSIHN…IEKDSEVRTM (120 aa)) constitute a propeptide, removed in mature form. One can recognise an Inhibitor I9 domain in the interval 43-136 (SYIVVFKKHV…IEKDSEVRTM (94 aa)). Residues 146 to 448 (PWGLARISHR…GGSANYTKIL (303 aa)) form the Peptidase S8 domain. 2 igE-binding regions span residues 180 to 198 (VIDT…RANW) and 209 to 231 (EDGN…GVAK). Residues Asp-182 and His-214 each act as charge relay system in the active site. N-linked (GlcNAc...) asparagine glycans are attached at residues Asn-244 and Asn-280. The Charge relay system role is filled by Ser-376. Asn-443 is a glycosylation site (N-linked (GlcNAc...) asparagine). Residues 454–494 (KAHNAETTVEDRIGGIIDSAEKAFHKELGAIYSEIKDAVSA) constitute a propeptide, removed in mature form.

It belongs to the peptidase S8 family.

Functionally, serine protease. The chain is Subtilisin-like serine protease EN45_078720 from Penicillium chrysogenum (Penicillium notatum).